Reading from the N-terminus, the 145-residue chain is Large ribosomal subunit protein uL16 (145 aa).

Belongs to the universal ribosomal protein uL16 family. Part of the 50S ribosomal subunit.

Functionally, binds 23S rRNA and is also seen to make contacts with the A and possibly P site tRNAs. The sequence is that of Large ribosomal subunit protein uL16 from Lactobacillus gasseri (strain ATCC 33323 / DSM 20243 / BCRC 14619 / CIP 102991 / JCM 1131 / KCTC 3163 / NCIMB 11718 / NCTC 13722 / AM63).